The sequence spans 398 residues: 2-amino-3-ketobutyrate coenzyme A ligase (398 aa).

111–112 provides a ligand contact to pyridoxal 5'-phosphate; the sequence is CF. Histidine 136 serves as a coordination point for substrate. Pyridoxal 5'-phosphate contacts are provided by residues serine 185, 210-213, 241-244, and 274-275; these read DDSH, TLGK, and SN. Residue lysine 244 is modified to N6-(pyridoxal phosphate)lysine. Arginine 368 lines the substrate pocket.

The protein belongs to the class-II pyridoxal-phosphate-dependent aminotransferase family. Homodimer. Requires pyridoxal 5'-phosphate as cofactor.

The catalysed reaction is glycine + acetyl-CoA = (2S)-2-amino-3-oxobutanoate + CoA. Its pathway is amino-acid degradation; L-threonine degradation via oxydo-reductase pathway; glycine from L-threonine: step 2/2. Functionally, catalyzes the cleavage of 2-amino-3-ketobutyrate to glycine and acetyl-CoA. This is 2-amino-3-ketobutyrate coenzyme A ligase from Salmonella typhimurium (strain LT2 / SGSC1412 / ATCC 700720).